We begin with the raw amino-acid sequence, 214 residues long: Ras-related protein RABA2b (214 aa).

19 to 26 (GDSGVGKS) serves as a coordination point for GTP. The Effector region signature appears at 41–49 (SKSTIGVEF). Residues 67-71 (DTAGQ), 125-128 (NKSD), and 155-156 (SA) each bind GTP. S-geranylgeranyl cysteine attachment occurs at residues cysteine 211 and cysteine 212.

This sequence belongs to the small GTPase superfamily. Rab family. Expressed in root tips.

It is found in the endosome membrane. The protein resides in the golgi apparatus. Its subcellular location is the trans-Golgi network membrane. In terms of biological role, intracellular vesicle trafficking and protein transport. The polypeptide is Ras-related protein RABA2b (RABA2B) (Arabidopsis thaliana (Mouse-ear cress)).